Here is a 345-residue protein sequence, read N- to C-terminus: Uroporphyrinogen decarboxylase (345 aa).

Substrate-binding positions include Arg26–Arg30, Phe45, Asp75, Tyr151, Ser206, and His320.

It belongs to the uroporphyrinogen decarboxylase family. In terms of assembly, homodimer.

The protein localises to the cytoplasm. The catalysed reaction is uroporphyrinogen III + 4 H(+) = coproporphyrinogen III + 4 CO2. It participates in porphyrin-containing compound metabolism; protoporphyrin-IX biosynthesis; coproporphyrinogen-III from 5-aminolevulinate: step 4/4. In terms of biological role, catalyzes the decarboxylation of four acetate groups of uroporphyrinogen-III to yield coproporphyrinogen-III. In Staphylococcus carnosus (strain TM300), this protein is Uroporphyrinogen decarboxylase.